We begin with the raw amino-acid sequence, 264 residues long: Isoprenyl transferase (264 aa).

D43 is a catalytic residue. D43 is a binding site for Mg(2+). Substrate-binding positions include 44-47, W48, R56, H60, and 88-90; these read GNGR and STE. N91 acts as the Proton acceptor in catalysis. Substrate contacts are provided by residues W92, R94, R211, and 217–219; that span reads RTS. E230 provides a ligand contact to Mg(2+).

This sequence belongs to the UPP synthase family. As to quaternary structure, homodimer. The cofactor is Mg(2+).

Catalyzes the condensation of isopentenyl diphosphate (IPP) with allylic pyrophosphates generating different type of terpenoids. This is Isoprenyl transferase from Bifidobacterium longum (strain NCC 2705).